The sequence spans 433 residues: Trigger factor (433 aa).

The PPIase FKBP-type domain occupies 161–246 (DSRVTIDFIG…LHKVEAQELP (86 aa)).

The protein belongs to the FKBP-type PPIase family. Tig subfamily.

The protein localises to the cytoplasm. The enzyme catalyses [protein]-peptidylproline (omega=180) = [protein]-peptidylproline (omega=0). Functionally, involved in protein export. Acts as a chaperone by maintaining the newly synthesized protein in an open conformation. Functions as a peptidyl-prolyl cis-trans isomerase. The sequence is that of Trigger factor from Photobacterium profundum (strain SS9).